Consider the following 174-residue polypeptide: uncharacterized protein (174 aa).

This is an uncharacterized protein from Aquifex aeolicus (strain VF5).